The primary structure comprises 373 residues: Glutamate 5-kinase (373 aa).

An ATP-binding site is contributed by Lys12. The substrate site is built by Ser52, Asp139, and Asn154. 216–222 (TGGMVTK) contacts ATP. The region spanning 281–359 (RGSICVDDGA…QELNAVLGGN (79 aa)) is the PUA domain.

This sequence belongs to the glutamate 5-kinase family.

It localises to the cytoplasm. The catalysed reaction is L-glutamate + ATP = L-glutamyl 5-phosphate + ADP. It participates in amino-acid biosynthesis; L-proline biosynthesis; L-glutamate 5-semialdehyde from L-glutamate: step 1/2. In terms of biological role, catalyzes the transfer of a phosphate group to glutamate to form L-glutamate 5-phosphate. The chain is Glutamate 5-kinase from Dehalococcoides mccartyi (strain CBDB1).